The chain runs to 331 residues: UBX domain-containing protein 2B (331 aa).

2 disordered regions span residues 1–26 (MAEG…SARD) and 40–65 (KCKS…QRFY). Position 2 is an N-acetylalanine (A2). S56 carries the post-translational modification Phosphoserine. T59 bears the Phosphothreonine mark. S66 carries the post-translational modification Phosphoserine. One can recognise an SEP domain in the interval 141–206 (DVQILLKLWS…MEDHQDQEYI (66 aa)). Residues S231, S234, and S235 each carry the phosphoserine modification. One can recognise a UBX domain in the interval 252-329 (DSVPTTKIQI…DILNTVLLQQ (78 aa)).

It belongs to the NSFL1C family. In terms of assembly, interacts with VCP. Does not bind ubiquitin.

Its subcellular location is the nucleus. It is found in the cytoplasm. It localises to the cytosol. The protein resides in the endoplasmic reticulum. The protein localises to the golgi apparatus. Its subcellular location is the cytoskeleton. It is found in the microtubule organizing center. It localises to the centrosome. Its function is as follows. Adapter protein required for Golgi and endoplasmic reticulum biogenesis. Involved in Golgi and endoplasmic reticulum maintenance during interphase and in their reassembly at the end of mitosis. The complex formed with VCP has membrane fusion activity; membrane fusion activity requires USO1-GOLGA2 tethering and BET1L. VCPIP1 is also required, but not its deubiquitinating activity. Together with NSFL1C/p47, regulates the centrosomal levels of kinase AURKA/Aurora A during mitotic progression by promoting AURKA removal from centrosomes in prophase. Also, regulates spindle orientation during mitosis. The sequence is that of UBX domain-containing protein 2B (UBXN2B) from Homo sapiens (Human).